The chain runs to 871 residues: Translation initiation factor IF-2 (871 aa).

Disordered stretches follow at residues K60 to K101 and E184 to S203. The span at K61–K72 shows a compositional bias: basic residues. Residues K73–K101 are compositionally biased toward basic and acidic residues. Residues T370–E537 enclose the tr-type G domain. The interval G379–T386 is G1. Residue G379 to T386 participates in GTP binding. Positions G404 to H408 are G2. Residues D425–G428 are G3. Residues D425–H429 and N479–D482 contribute to the GTP site. The interval N479 to D482 is G4. The G5 stretch occupies residues S515 to K517.

This sequence belongs to the TRAFAC class translation factor GTPase superfamily. Classic translation factor GTPase family. IF-2 subfamily.

The protein resides in the cytoplasm. One of the essential components for the initiation of protein synthesis. Protects formylmethionyl-tRNA from spontaneous hydrolysis and promotes its binding to the 30S ribosomal subunits. Also involved in the hydrolysis of GTP during the formation of the 70S ribosomal complex. The sequence is that of Translation initiation factor IF-2 from Campylobacter jejuni subsp. jejuni serotype O:6 (strain 81116 / NCTC 11828).